Reading from the N-terminus, the 123-residue chain is Large ribosomal subunit protein uL14 (123 aa).

Belongs to the universal ribosomal protein uL14 family. In terms of assembly, part of the 50S ribosomal subunit. Forms a cluster with proteins L3 and L19. In the 70S ribosome, L14 and L19 interact and together make contacts with the 16S rRNA in bridges B5 and B8.

Binds to 23S rRNA. Forms part of two intersubunit bridges in the 70S ribosome. This chain is Large ribosomal subunit protein uL14, found in Corynebacterium urealyticum (strain ATCC 43042 / DSM 7109).